The primary structure comprises 247 residues: Uridylate kinase (247 aa).

ATP is bound at residue 17-20; sequence KFSG. UMP is bound at residue Gly-59. Positions 60 and 64 each coordinate ATP. UMP-binding positions include Asp-79 and 140–147; that span reads TGNPFFTT. 3 residues coordinate ATP: Thr-167, Tyr-173, and Asp-176.

The protein belongs to the UMP kinase family. In terms of assembly, homohexamer.

It is found in the cytoplasm. It catalyses the reaction UMP + ATP = UDP + ADP. It participates in pyrimidine metabolism; CTP biosynthesis via de novo pathway; UDP from UMP (UMPK route): step 1/1. Its activity is regulated as follows. Inhibited by UTP. Functionally, catalyzes the reversible phosphorylation of UMP to UDP. This Legionella pneumophila (strain Lens) protein is Uridylate kinase.